Consider the following 345-residue polypeptide: Transcription initiation factor IIB (345 aa).

Residues 8 to 40 form a TFIIB-type zinc finger; that stretch reads VGRNCPHCSAVDSLQTDDVMGEVACTACALVVA. 4 residues coordinate Zn(2+): C12, C15, C32, and C35. Disordered stretches follow at residues 59 to 89 and 318 to 345; these read DVDHHRERNANPTAATSAAGSLSAADPHMSS and PTAGKRKVDKNSEPEASGGTKRVKREET. A compositionally biased stretch (low complexity) spans 71–83; that stretch reads TAATSAAGSLSAA.

It belongs to the TFIIB family. In terms of assembly, monomer. Interacts with RNA polymerase II subunits RPB1 and RPB2. Interacts with TBP; the interaction is direct.

It is found in the nucleus. Specifically binds to the promoter of the spliced leader (SL) RNA gene and thus is essential for SLRNA transcription. The polypeptide is Transcription initiation factor IIB (Trypanosoma brucei brucei).